Consider the following 98-residue polypeptide: Citrate lyase acyl carrier protein (98 aa).

S14 carries the O-(phosphoribosyl dephospho-coenzyme A)serine modification.

The protein belongs to the CitD family. In terms of assembly, oligomer with a subunit composition of (alpha,beta,gamma)6.

The protein resides in the cytoplasm. In terms of biological role, covalent carrier of the coenzyme of citrate lyase. In Citrobacter koseri (strain ATCC BAA-895 / CDC 4225-83 / SGSC4696), this protein is Citrate lyase acyl carrier protein.